A 658-amino-acid polypeptide reads, in one-letter code: Threonine--tRNA ligase (658 aa).

A TGS domain is found at 1-64 (MSNTVSLQFP…GASGKLEIIT (64 aa)). The tract at residues 246-548 (DHRRLGREMD…LIENFAGHMP (303 aa)) is catalytic. Zn(2+) contacts are provided by cysteine 343, histidine 394, and histidine 525.

Belongs to the class-II aminoacyl-tRNA synthetase family. Homodimer. The cofactor is Zn(2+).

It is found in the cytoplasm. It carries out the reaction tRNA(Thr) + L-threonine + ATP = L-threonyl-tRNA(Thr) + AMP + diphosphate + H(+). Its function is as follows. Catalyzes the attachment of threonine to tRNA(Thr) in a two-step reaction: L-threonine is first activated by ATP to form Thr-AMP and then transferred to the acceptor end of tRNA(Thr). Also edits incorrectly charged L-seryl-tRNA(Thr). This chain is Threonine--tRNA ligase, found in Brucella abortus (strain S19).